The sequence spans 289 residues: MSFKDRLFICSQYLLPHHLLSRLIGFAADCRATWFKDRLIAWFARRYQVDMREAQVEDLQAYEHFNAFFTRALKDGARPLAQEPGAVLCPADGAISQLGPIEHGRIFQAKGHSYSLAELLGGDAELAAPFMGGDFATVYLSPRDYHRVHMPLAGTLREMVYVPGRLFSVNQTTAENVPELFARNERVVCLFDTERGPMAVVLVGAMIVASIETVWAGLVTPPKRELKTFRYDEAARAPIRLEKGAELGRFKLGSTAIVLFGPQQVAFNDGLGAASPVRMGECLALPKQA.

Residues Asp92, His149, and Ser254 each act as charge relay system; for autoendoproteolytic cleavage activity in the active site. The active-site Schiff-base intermediate with substrate; via pyruvic acid; for decarboxylase activity is Ser254. At Ser254 the chain carries Pyruvic acid (Ser); by autocatalysis.

This sequence belongs to the phosphatidylserine decarboxylase family. PSD-B subfamily. Prokaryotic type I sub-subfamily. As to quaternary structure, heterodimer of a large membrane-associated beta subunit and a small pyruvoyl-containing alpha subunit. It depends on pyruvate as a cofactor. Post-translationally, is synthesized initially as an inactive proenzyme. Formation of the active enzyme involves a self-maturation process in which the active site pyruvoyl group is generated from an internal serine residue via an autocatalytic post-translational modification. Two non-identical subunits are generated from the proenzyme in this reaction, and the pyruvate is formed at the N-terminus of the alpha chain, which is derived from the carboxyl end of the proenzyme. The autoendoproteolytic cleavage occurs by a canonical serine protease mechanism, in which the side chain hydroxyl group of the serine supplies its oxygen atom to form the C-terminus of the beta chain, while the remainder of the serine residue undergoes an oxidative deamination to produce ammonia and the pyruvoyl prosthetic group on the alpha chain. During this reaction, the Ser that is part of the protease active site of the proenzyme becomes the pyruvoyl prosthetic group, which constitutes an essential element of the active site of the mature decarboxylase.

It localises to the cell membrane. The enzyme catalyses a 1,2-diacyl-sn-glycero-3-phospho-L-serine + H(+) = a 1,2-diacyl-sn-glycero-3-phosphoethanolamine + CO2. It functions in the pathway phospholipid metabolism; phosphatidylethanolamine biosynthesis; phosphatidylethanolamine from CDP-diacylglycerol: step 2/2. In terms of biological role, catalyzes the formation of phosphatidylethanolamine (PtdEtn) from phosphatidylserine (PtdSer). The sequence is that of Phosphatidylserine decarboxylase proenzyme from Pseudomonas aeruginosa (strain UCBPP-PA14).